The following is a 318-amino-acid chain: MNGSWITILSLLVISQLASSKVTLIGKNTFLSFDDVEANFTPVVRRSGEYGLLYAAEPLDACSYLTNMAEKGSKFRPSYVLIVRGGCSFEEKIRNAQEAGYKAAIVYNDRYEELLVRMAGNSSGVYIHGVLVTRTSGEVLKEYTSRAEMELLLIPGFGISSWSIMAITFVSLLVISAVLASYFSVRRHRIRQHVRDLHHGGQGHSRMPKDLLQSMPTEVYTGVLEEGSTSVTCAICIDDYRVGEILRILPCKHKYHAVCIDSWLGRCRSFCPVCKQNPRTGNDVPPASETTPLISPGPNSITSLQSFYDLPIVVRVYL.

Positions 1 to 20 are cleaved as a signal peptide; sequence MNGSWITILSLLVISQLASS. Over 22–162 the chain is Lumenal; it reads VTLIGKNTFL…LIPGFGISSW (141 aa). C62 and C87 form a disulfide bridge. Residues 70–143 form the PA domain; the sequence is EKGSKFRPSY…RTSGEVLKEY (74 aa). N121 is a glycosylation site (N-linked (GlcNAc...) asparagine). A helical membrane pass occupies residues 163 to 183; the sequence is SIMAITFVSLLVISAVLASYF. Residues 184-318 lie on the Cytoplasmic side of the membrane; it reads SVRRHRIRQH…DLPIVVRVYL (135 aa). An RING-type; atypical zinc finger spans residues 233–275; sequence CAICIDDYRVGEILRILPCKHKYHAVCIDSWLGRCRSFCPVCK.

The protein resides in the prevacuolar compartment membrane. It localises to the protein storage vacuole membrane. Functionally, involved in the trafficking of vacuolar proteins. May function as a sorting receptor for protein trafficking to the protein storage vacuole (PSV). The protein is Receptor homology region, transmembrane domain- and RING domain-containing protein 6 (RMR6) of Arabidopsis thaliana (Mouse-ear cress).